The primary structure comprises 610 residues: UvrABC system protein C (610 aa).

The GIY-YIG domain occupies 16–94 (SQPGVYRMYD…IKLYQPRYNV (79 aa)). Residues 204-239 (DQVLTQLISRMETASQNLEFEEAARIRDQIQAVRRV) form the UVR domain.

Belongs to the UvrC family. Interacts with UvrB in an incision complex.

It localises to the cytoplasm. The UvrABC repair system catalyzes the recognition and processing of DNA lesions. UvrC both incises the 5' and 3' sides of the lesion. The N-terminal half is responsible for the 3' incision and the C-terminal half is responsible for the 5' incision. The polypeptide is UvrABC system protein C (Escherichia coli O1:K1 / APEC).